The primary structure comprises 305 residues: Tyrosine recombinase XerD (305 aa).

Residues methionine 1–isoleucine 83 form the Core-binding (CB) domain. The Tyr recombinase domain maps to lysine 104 to leucine 298. Residues arginine 145, lysine 175, histidine 250, arginine 253, and histidine 276 contribute to the active site. The active-site O-(3'-phospho-DNA)-tyrosine intermediate is tyrosine 285.

It belongs to the 'phage' integrase family. XerD subfamily. Forms a cyclic heterotetrameric complex composed of two molecules of XerC and two molecules of XerD.

The protein localises to the cytoplasm. Its function is as follows. Site-specific tyrosine recombinase, which acts by catalyzing the cutting and rejoining of the recombining DNA molecules. The XerC-XerD complex is essential to convert dimers of the bacterial chromosome into monomers to permit their segregation at cell division. It also contributes to the segregational stability of plasmids. This Rickettsia bellii (strain RML369-C) protein is Tyrosine recombinase XerD.